The sequence spans 323 residues: Type II restriction enzyme BsoBI (323 aa).

Mg(2+) contacts are provided by Asp-212, Glu-240, and Lys-242.

Homodimer.

The catalysed reaction is Endonucleolytic cleavage of DNA to give specific double-stranded fragments with terminal 5'-phosphates.. Functionally, a P subtype restriction enzyme that recognizes the double-stranded sequence 5'-CYCGRG-3' and cleaves after C-1. This chain is Type II restriction enzyme BsoBI, found in Geobacillus stearothermophilus (Bacillus stearothermophilus).